The sequence spans 209 residues: ATP phosphoribosyltransferase (209 aa).

It belongs to the ATP phosphoribosyltransferase family. Short subfamily. As to quaternary structure, heteromultimer composed of HisG and HisZ subunits.

It is found in the cytoplasm. It carries out the reaction 1-(5-phospho-beta-D-ribosyl)-ATP + diphosphate = 5-phospho-alpha-D-ribose 1-diphosphate + ATP. It functions in the pathway amino-acid biosynthesis; L-histidine biosynthesis; L-histidine from 5-phospho-alpha-D-ribose 1-diphosphate: step 1/9. In terms of biological role, catalyzes the condensation of ATP and 5-phosphoribose 1-diphosphate to form N'-(5'-phosphoribosyl)-ATP (PR-ATP). Has a crucial role in the pathway because the rate of histidine biosynthesis seems to be controlled primarily by regulation of HisG enzymatic activity. The protein is ATP phosphoribosyltransferase of Sulfurimonas denitrificans (strain ATCC 33889 / DSM 1251) (Thiomicrospira denitrificans (strain ATCC 33889 / DSM 1251)).